Consider the following 828-residue polypeptide: MTDNQENKPKKLTLSNTKLSLNKSFDSLASTQSFVNAKSKTLVEVRKSYSGSTTTLSLNKEKGSLETGSSSGSEEFNRRLSILKKAAEQSKLNDNSQISTLSKLASINQSIASQEDPIEVEQEESSDTNKVKEEPKIEEVKDIEESTLQTPKKKEDIFVKSPLVGTRTRYGIESEKTVDKVTENKVIAPKPKVEESRKFKKTDLFNMVGDDENDNRNRTRSLASIKRAREKEKRKSLVQAPEKVYREITLPEVIGVGDFANAMSERVSDVIKELMKLGILANASQTIDADTAELVATHLGHAVKRVQESDVENILITNDKEEDLRSRAPVVTVMGHVDHGKTSLLDALKSTDVASGETGGITQHIGAYRVTLADGRAITFIDTPGHEAFSEMRSRGAGVTDIVIIVVAADDGIKPQTVEAINHAKAANVPIIVAINKIDKPDIDIERVKNELYMYEIIGEEAGGDVMVIPISALKKINLDKLEEAILLIAEMQNLKASPFGSASGVVIESKIEKGRGALTTMLVQRGTLKSGDIIIAGTAYGKVKKMTNDKGIEVLEATPSVPIEIQGLSHVPHAGDMFNVVQTEKQAKDIAEYRERVAKEKKISIAPRSSLEDLFLKASGSSKIKELPLIIKGDVHGSVEAIAGSLLKLPNDEVKLRILHSGVGPITESDVSLAHASSAIIVGFNVRAGANAKTAAEKEKVEIRYYSIIYDLLDDVKAIMSGMLDPIIREQYIGSVEIRQIFNITKIGKIAGSYVTRGIIKKGAGVRLLRDNIVIHEGKLKTLKRFKEEVKEVREGYECGIAFENYEDIREGDTVEVFELIQEKKQL.

Disordered stretches follow at residues 48–76 (SYSG…SEEF) and 112–137 (ASQE…EPKI). The segment covering 49 to 58 (YSGSTTTLSL) has biased composition (polar residues). Positions 65-74 (LETGSSSGSE) are enriched in low complexity. A compositionally biased stretch (acidic residues) spans 116–126 (DPIEVEQEESS). Residues 127–137 (DTNKVKEEPKI) show a composition bias toward basic and acidic residues. A tr-type G domain is found at 326 to 496 (SRAPVVTVMG…LLIAEMQNLK (171 aa)). Positions 335-342 (GHVDHGKT) are G1. 335-342 (GHVDHGKT) serves as a coordination point for GTP. The interval 360-364 (GITQH) is G2. Residues 382–385 (DTPG) are G3. GTP contacts are provided by residues 382–386 (DTPGH) and 436–439 (NKID). The interval 436–439 (NKID) is G4. The tract at residues 472 to 474 (SAL) is G5.

Belongs to the TRAFAC class translation factor GTPase superfamily. Classic translation factor GTPase family. IF-2 subfamily.

The protein resides in the cytoplasm. In terms of biological role, one of the essential components for the initiation of protein synthesis. Protects formylmethionyl-tRNA from spontaneous hydrolysis and promotes its binding to the 30S ribosomal subunits. Also involved in the hydrolysis of GTP during the formation of the 70S ribosomal complex. The chain is Translation initiation factor IF-2 from Rickettsia bellii (strain RML369-C).